We begin with the raw amino-acid sequence, 286 residues long: Acetyl-coenzyme A carboxylase carboxyl transferase subunit beta (286 aa).

Residues 23-286 (IWVKCNNCNQ…ITNKPEPKKE (264 aa)) enclose the CoA carboxyltransferase N-terminal domain. 4 residues coordinate Zn(2+): C27, C30, C46, and C49. Residues 27-49 (CNNCNQMIYKIELEKNLEVCPKC) form a C4-type zinc finger.

The protein belongs to the AccD/PCCB family. Acetyl-CoA carboxylase is a heterohexamer composed of biotin carboxyl carrier protein (AccB), biotin carboxylase (AccC) and two subunits each of ACCase subunit alpha (AccA) and ACCase subunit beta (AccD). Zn(2+) is required as a cofactor.

It localises to the cytoplasm. The catalysed reaction is N(6)-carboxybiotinyl-L-lysyl-[protein] + acetyl-CoA = N(6)-biotinyl-L-lysyl-[protein] + malonyl-CoA. Its pathway is lipid metabolism; malonyl-CoA biosynthesis; malonyl-CoA from acetyl-CoA: step 1/1. Functionally, component of the acetyl coenzyme A carboxylase (ACC) complex. Biotin carboxylase (BC) catalyzes the carboxylation of biotin on its carrier protein (BCCP) and then the CO(2) group is transferred by the transcarboxylase to acetyl-CoA to form malonyl-CoA. This is Acetyl-coenzyme A carboxylase carboxyl transferase subunit beta from Wigglesworthia glossinidia brevipalpis.